A 543-amino-acid polypeptide reads, in one-letter code: Zinc finger CCHC domain-containing protein 7 (543 aa).

A disordered region spans residues 51–71; it reads EEEHEEKNSGNSESSSSKPNQ. The segment covering 59–68 has biased composition (low complexity); that stretch reads SGNSESSSSK. Residues Lys-131, Lys-139, Lys-141, Lys-239, and Lys-254 each participate in a glycyl lysine isopeptide (Lys-Gly) (interchain with G-Cter in SUMO2) cross-link. 3 CCHC-type zinc fingers span residues 241-258, 263-280, and 304-321; these read IICRNCDKRGHLSKNCPL, RRCFLCSRRGHLLYSCPA, and KQCDRCHMLGHYTDACTE. A Glycyl lysine isopeptide (Lys-Gly) (interchain with G-Cter in SUMO2) cross-link involves residue Lys-339. Residues 348–365 form a CCHC-type 4 zinc finger; sequence AYCYHCAQKGHYGHECPE. Residues Lys-412, Lys-417, and Lys-435 each participate in a glycyl lysine isopeptide (Lys-Gly) (interchain with G-Cter in SUMO2) cross-link. The disordered stretch occupies residues 414 to 543; sequence PYIKAANENP…FLIKQRKKKS (130 aa). Basic and acidic residues-rich tracts occupy residues 441–457 and 465–475; these read QENKETQKEMKNKNRNW and RHREVDEDFPR. Residue Lys-478 forms a Glycyl lysine isopeptide (Lys-Gly) (interchain with G-Cter in SUMO2) linkage. A compositionally biased stretch (polar residues) spans 479 to 491; it reads TYSSPGSFKTQKP. A phosphoserine mark is found at Ser-482 and Ser-485. Glycyl lysine isopeptide (Lys-Gly) (interchain with G-Cter in SUMO2) cross-links involve residues Lys-487, Lys-490, and Lys-493. Residues 493-502 show a composition bias toward basic residues; the sequence is KPFHRSSHYH. The span at 503–515 shows a compositional bias: basic and acidic residues; the sequence is TSREDKSPKEGKR. Lys-537 is covalently cross-linked (Glycyl lysine isopeptide (Lys-Gly) (interchain with G-Cter in SUMO2)).

As to quaternary structure, component of a nucleolar TRAMP-like complex, an ATP-dependent exosome regulatory complex consisting of a helicase (MTREX), an oligadenylate polymerase (TENT4B or TENT4A), and a substrate specific RNA-binding factor (ZCCHC7 or ZCCHC8). Several TRAMP-like complexes exist with specific compositions and are associated with nuclear, or nucleolar RNA exosomes.

The protein localises to the nucleus. It is found in the nucleolus. The polypeptide is Zinc finger CCHC domain-containing protein 7 (ZCCHC7) (Homo sapiens (Human)).